The chain runs to 1342 residues: Zinc finger protein 335 (1342 aa).

2 disordered regions span residues 1–102 (MEEN…VTGG) and 201–228 (TSTS…AEEP). The span at 34–49 (AVSADSSDAAAAPGQA) shows a compositional bias: low complexity. Positions 201–217 (TSTSTCLEAQGGPSSPV) are enriched in polar residues. The segment at 245–268 (FKCKMCQYRSSTKATLLRHMRERH) adopts a C2H2-type 1 zinc-finger fold. The tract at residues 274-442 (AAAAAAGKKG…TLPRRRGRPS (169 aa)) is disordered. The span at 297 to 327 (EEGPEEEDDDDIVDAGAIDDLEEDSDYNPAE) shows a compositional bias: acidic residues. The segment covering 346-357 (RPRRRPGRPRKL) has biased composition (basic residues). 8 C2H2-type zinc fingers span residues 465–487 (FLCR…VNSH), 495–517 (FKCL…MFNH), 523–545 (YKCD…AAVH), 562–584 (FPCP…MKTH), 590–612 (HMCD…LLTH), 621–643 (FKCE…QLSH), 649–672 (FKCS…AVKH), and 678–701 (FACE…RCRH). Disordered stretches follow at residues 732 to 763 (LKQQ…QSSE) and 964 to 1013 (CGGL…SAAT). The segment covering 740-753 (PGPPPSSPGPPEIP) has biased composition (pro residues). Phosphoserine is present on residues Ser976, Ser992, and Ser1007. Over residues 986–997 (SQSSASSPPATS) the composition is skewed to low complexity. 4 C2H2-type zinc fingers span residues 1019–1041 (FSCK…KRAH), 1047–1069 (FKCP…MAQH), 1075–1097 (HQCS…MLTH), and 1103–1126 (FACH…QRLH). Lys1022 participates in a covalent cross-link: Glycyl lysine isopeptide (Lys-Gly) (interchain with G-Cter in SUMO2). The tract at residues 1041 to 1342 (HAGPGAFKCP…EYDVITLADD (302 aa)) is involved in the interaction with CCAR2. Residue Ser1153 is modified to Phosphoserine.

Belongs to the krueppel C2H2-type zinc-finger protein family. In terms of assembly, interacts with NCOA6; may enhance ligand-dependent transcriptional activation by nuclear hormone receptors. Interacts with CNOT6. Interacts with CNOT9; the interaction is direct. Component of a nuclear receptor-mediated transcription complex composed of at least ZNF335, CCAR2 and EMSY; the complex stimulates the transcription of nuclear receptor target genes such as SOX9 and HOXA1. Within the complex interacts with EMSY and interacts (via C-terminus) with CCAR2. Interacts with members of histone H3'Lys4'(H3K4) methyltransferase complexes ASH2L, CXXC1, KMT2A/MLL1, RBBP5, SETD1A and WDR5. Component of a histone methylation complex composed of at least ZNF335, RBBP5, ASH2L and WDR5; the complex may have histone H3-specific methyltransferase activity, however does not have specificity for 'Lys-4' of histone H3. Interacts with RBBP5 and WDR5. Interacts with ASHL2. Components of this complex may associate with components of the ZNF335-CCAR2-EMSY nuclear receptor-mediated transcription complex to form a complex at least composed of ZNF335, HCFC1, CCAR2, EMSY, MKI67, RBBP5, ASH2L and WDR5. Within this complex also interacts with HCFC1 and MKI67. In terms of tissue distribution, ubiquitously expressed.

It localises to the nucleus. Its function is as follows. Component or associated component of some histone methyltransferase complexes may regulate transcription through recruitment of those complexes on gene promoters. Enhances ligand-dependent transcriptional activation by nuclear hormone receptors. Plays an important role in neural progenitor cell proliferation and self-renewal through the regulation of specific genes involved brain development, including REST. Also controls the expression of genes involved in somatic development and regulates, for instance, lymphoblast proliferation. This chain is Zinc finger protein 335 (ZNF335), found in Homo sapiens (Human).